Consider the following 233-residue polypeptide: Partner of Y14 and mago (233 aa).

The interval 1-153 (MTTYSTDSQG…SNNSDSTVDE (153 aa)) is disordered. A coiled-coil region spans residues 62–97 (EVVQKAKEKRERERLRQAREEQQRKEQQNKKQQAGA). Residues 65 to 90 (QKAKEKRERERLRQAREEQQRKEQQN) are compositionally biased toward basic and acidic residues. Positions 122-142 (KQPQQHTKSSQQKSTTAAAAA) are enriched in low complexity. A coiled-coil region spans residues 167–199 (ADAQQLEVAKKLRKLRKKIREIEAIETKLRSTD).

The protein belongs to the pym family. As to quaternary structure, interacts (via N-terminus) with mago and tsu/Y14; the interaction is direct.

It is found in the cytoplasm. The protein localises to the nucleus. Regulator of the exon junction complex (EJC), a multiprotein complex that associates immediately upstream of the exon-exon junction on mRNAs and serves as a positional landmarks for the intron exon structure of genes and directs post-transcriptional processes in the cytoplasm such as mRNA export, nonsense-mediated mRNA decay (NMD) or translation. In Anopheles gambiae (African malaria mosquito), this protein is Partner of Y14 and mago.